Here is a 517-residue protein sequence, read N- to C-terminus: 2-isopropylmalate synthase (517 aa).

Positions 7–269 (VIIFDTTLRD…ETGIDTTQIV (263 aa)) constitute a Pyruvate carboxyltransferase domain. Mn(2+) is bound by residues Asp-16, His-204, His-206, and Asn-240. Residues 395 to 517 (KFISQKISTE…KPKAQGSGTI (123 aa)) are regulatory domain.

It belongs to the alpha-IPM synthase/homocitrate synthase family. LeuA type 1 subfamily. In terms of assembly, homodimer. Mn(2+) serves as cofactor.

The protein localises to the cytoplasm. It catalyses the reaction 3-methyl-2-oxobutanoate + acetyl-CoA + H2O = (2S)-2-isopropylmalate + CoA + H(+). It functions in the pathway amino-acid biosynthesis; L-leucine biosynthesis; L-leucine from 3-methyl-2-oxobutanoate: step 1/4. Functionally, catalyzes the condensation of the acetyl group of acetyl-CoA with 3-methyl-2-oxobutanoate (2-ketoisovalerate) to form 3-carboxy-3-hydroxy-4-methylpentanoate (2-isopropylmalate). The sequence is that of 2-isopropylmalate synthase from Neisseria meningitidis serogroup A / serotype 4A (strain DSM 15465 / Z2491).